Here is a 101-residue protein sequence, read N- to C-terminus: Small ribosomal subunit protein bS6 (101 aa).

It belongs to the bacterial ribosomal protein bS6 family.

Functionally, binds together with bS18 to 16S ribosomal RNA. The chain is Small ribosomal subunit protein bS6 from Pseudarthrobacter chlorophenolicus (strain ATCC 700700 / DSM 12829 / CIP 107037 / JCM 12360 / KCTC 9906 / NCIMB 13794 / A6) (Arthrobacter chlorophenolicus).